The chain runs to 353 residues: L-tryptophan dehydrogenase (353 aa).

R44 is an NAD(+) binding site. K80 serves as the catalytic Proton donor/acceptor. NAD(+) contacts are provided by residues D114, T146, 176–181, K204, and 255–257; these read GLGNVG and AAN.

This sequence belongs to the Glu/Leu/Phe/Val dehydrogenases family. In terms of assembly, homodimer.

The enzyme catalyses L-tryptophan + NAD(+) + H2O = indole-3-pyruvate + NH4(+) + NADH + H(+). In terms of biological role, catalyzes the reversible oxidative deamination of L-tryptophan to indole-3-pyruvate in the presence of NAD(+). Cannot use other L-amino acids and D-Trp. Involved in the biosynthesis of scytonemin, a cyanobacterial radiation-absorbing pigment. This Nostoc punctiforme (strain ATCC 29133 / PCC 73102) protein is L-tryptophan dehydrogenase.